The sequence spans 215 residues: Reticulon-like protein B14 (215 aa).

Residues 31-211 (FADIMFWKNK…NKIPKAQAKT (181 aa)) form the Reticulon domain. 3 helical membrane passes run 41 to 61 (KESGTILGVFTLIWFLFEVVE), 62 to 82 (YPFITFLCQILLLFIFIFLIW), and 141 to 161 (LWILSVVGNYFSSLTLLYIVF).

It is found in the endoplasmic reticulum membrane. This Arabidopsis thaliana (Mouse-ear cress) protein is Reticulon-like protein B14 (RTNLB14).